Reading from the N-terminus, the 440-residue chain is ATP-dependent protease ATPase subunit HslU (440 aa).

Residues Val-18, 60 to 65, Asp-254, Glu-319, and Arg-391 contribute to the ATP site; that span reads GVGKTE.

Belongs to the ClpX chaperone family. HslU subfamily. As to quaternary structure, a double ring-shaped homohexamer of HslV is capped on each side by a ring-shaped HslU homohexamer. The assembly of the HslU/HslV complex is dependent on binding of ATP.

It localises to the cytoplasm. In terms of biological role, ATPase subunit of a proteasome-like degradation complex; this subunit has chaperone activity. The binding of ATP and its subsequent hydrolysis by HslU are essential for unfolding of protein substrates subsequently hydrolyzed by HslV. HslU recognizes the N-terminal part of its protein substrates and unfolds these before they are guided to HslV for hydrolysis. This Cellvibrio japonicus (strain Ueda107) (Pseudomonas fluorescens subsp. cellulosa) protein is ATP-dependent protease ATPase subunit HslU.